Consider the following 171-residue polypeptide: 3-hydroxydecanoyl-[acyl-carrier-protein] dehydratase (171 aa).

His71 is an active-site residue.

Belongs to the thioester dehydratase family. FabA subfamily. In terms of assembly, homodimer.

It localises to the cytoplasm. The enzyme catalyses a (3R)-hydroxyacyl-[ACP] = a (2E)-enoyl-[ACP] + H2O. It carries out the reaction (3R)-hydroxydecanoyl-[ACP] = (2E)-decenoyl-[ACP] + H2O. It catalyses the reaction (2E)-decenoyl-[ACP] = (3Z)-decenoyl-[ACP]. It functions in the pathway lipid metabolism; fatty acid biosynthesis. Functionally, necessary for the introduction of cis unsaturation into fatty acids. Catalyzes the dehydration of (3R)-3-hydroxydecanoyl-ACP to E-(2)-decenoyl-ACP and then its isomerization to Z-(3)-decenoyl-ACP. Can catalyze the dehydratase reaction for beta-hydroxyacyl-ACPs with saturated chain lengths up to 16:0, being most active on intermediate chain length. The polypeptide is 3-hydroxydecanoyl-[acyl-carrier-protein] dehydratase (Sinorhizobium medicae (strain WSM419) (Ensifer medicae)).